A 117-amino-acid polypeptide reads, in one-letter code: Immunoglobulin heavy variable 5-51 (117 aa).

The first 19 residues, 1 to 19, serve as a signal peptide directing secretion; sequence MGSTAILALLLAVLQGVCA. Residues 20–44 form a framework-1 region; it reads EVQLVQSGAEVKKPGESLKISCKGS. The region spanning 20–117 is the Ig-like domain; that stretch reads EVQLVQSGAE…SDTAMYYCAR (98 aa). Cys41 and Cys115 are joined by a disulfide. Positions 45–52 are complementarity-determining-1; the sequence is GYSFTSYW. The interval 53 to 69 is framework-2; the sequence is IGWVRQMPGKGLEWMGI. A complementarity-determining-2 region spans residues 70–77; sequence IYPGDSDT. The framework-3 stretch occupies residues 78 to 115; the sequence is RYSPSFQGQVTISADKSISTAYLQWSSLKASDTAMYYC. Residues 116 to 117 are complementarity-determining-3; sequence AR.

Immunoglobulins are composed of two identical heavy chains and two identical light chains; disulfide-linked.

It is found in the secreted. It localises to the cell membrane. Its function is as follows. V region of the variable domain of immunoglobulin heavy chains that participates in the antigen recognition. Immunoglobulins, also known as antibodies, are membrane-bound or secreted glycoproteins produced by B lymphocytes. In the recognition phase of humoral immunity, the membrane-bound immunoglobulins serve as receptors which, upon binding of a specific antigen, trigger the clonal expansion and differentiation of B lymphocytes into immunoglobulins-secreting plasma cells. Secreted immunoglobulins mediate the effector phase of humoral immunity, which results in the elimination of bound antigens. The antigen binding site is formed by the variable domain of one heavy chain, together with that of its associated light chain. Thus, each immunoglobulin has two antigen binding sites with remarkable affinity for a particular antigen. The variable domains are assembled by a process called V-(D)-J rearrangement and can then be subjected to somatic hypermutations which, after exposure to antigen and selection, allow affinity maturation for a particular antigen. In Homo sapiens (Human), this protein is Immunoglobulin heavy variable 5-51.